A 679-amino-acid chain; its full sequence is Patatin-like phospholipase 1 (679 aa).

Disordered stretches follow at residues Phe-19 to Asn-45 and Gly-155 to Ser-194. 2 stretches are compositionally biased toward polar residues: residues Tyr-35–Asn-45 and Thr-162–Gly-176. Residues Ser-177–Glu-188 show a composition bias toward basic and acidic residues. The 207-residue stretch at Leu-338–Leu-544 folds into the PNPLA domain. The GXSXG signature appears at Gly-381–Gly-385. The Nucleophile role is filled by Ser-383. Asp-531 functions as the Proton acceptor in the catalytic mechanism. A DGA/G motif is present at residues Asp-531–Ala-533.

This sequence belongs to the patatin family.

The protein resides in the cytoplasm. It carries out the reaction a 1,2-diacyl-sn-glycero-3-phosphocholine + H2O = a 1-acyl-sn-glycero-3-phosphocholine + a fatty acid + H(+). It catalyses the reaction 1,2-dihexadecanoyl-sn-glycero-3-phosphocholine + H2O = 1-hexadecanoyl-sn-glycero-3-phosphocholine + hexadecanoate + H(+). Its function is as follows. Hydrolyzes the ester bond of the fatty acyl group attached at the sn-2 position of phospholipids such as phosphatidylcholine. Involved in gametogenesis; however, it is not clear whether it is involved in gametocytes development in host erythrocytes or in gametocyte activation in the mosquito midgut. Involved in gametocyte development in host erythrocytes; however, not involved in gametocytes activation including male gamete exflagellation. Involved in the rounding up of gametocytes following activation in the mosquito midgut; however, not required for gametocyte development in host erythrocytes. Required for exflagellation of activated male gametocytes. Involved in gametocytes egress from host erythrocytes by promoting the relocalization of perforin-like protein PLP2-containing vesicles to the periphery of gametocytes; PLP2 secretion is required for permeabilization of the erythrocyte membrane and thus, promotes gametocyte egress. Dispensable for asexual blood stage development. The sequence is that of Patatin-like phospholipase 1 from Plasmodium falciparum (isolate NF54).